The sequence spans 601 residues: MTAKPIDTIRNFSIVAHIDHGKSTLADRLIQLTGALSAREMTEQVLDSMDIERERGITIKAQTVRLDYTAQDGRTYILNLMDTPGHVDFTYEVSRSLAACEGSLLVVDASQGVEAQTLANVYQAIDANHEIVPVLNKIDLPAAEPDRVKQQIEEVIGIDASEAVPISAKTGLNIEAVLEAIVAKLPPPKGDRAAPLKALLVDSWYDVYLGVVVLVRIVDGVLKKGMTIRMMGADAVYGVDRIGVFRPKMQDVAELGPGEVGFLTASIKEVADTRVGDTITEDRRPTDSPLPGFKPVQPVVFCGLFPVDAAEFENLRAAMGKLRLNDASFSYEMETSAALGFGFRCGFLGLLHLEIIQERLEREFNLDLISTAPSVVYRLNMSDGTMRELHNPADMPDVMKIDTIEEPWIRATILTPDDYLGSVLKLCQDRRGTQIDLNYVGKRAMVVYDLPLNEVVFDFYDRLKSISKGYASFDYHISDYREGDLVKMSILVNSEPVDALSMLVHRTRAESRGRAMCEKLKDLIPRHLFQIPVQAAIGGKIIARETIRALSKDVTAKCYGGDISRKRKLLDKQKEGKKRMRQFGKVEIPQEAFIAALKMDS.

Residues 7-189 form the tr-type G domain; that stretch reads DTIRNFSIVA…AIVAKLPPPK (183 aa). GTP is bound by residues 19 to 24 and 136 to 139; these read DHGKST and NKID.

It belongs to the TRAFAC class translation factor GTPase superfamily. Classic translation factor GTPase family. LepA subfamily.

Its subcellular location is the cell inner membrane. The catalysed reaction is GTP + H2O = GDP + phosphate + H(+). Required for accurate and efficient protein synthesis under certain stress conditions. May act as a fidelity factor of the translation reaction, by catalyzing a one-codon backward translocation of tRNAs on improperly translocated ribosomes. Back-translocation proceeds from a post-translocation (POST) complex to a pre-translocation (PRE) complex, thus giving elongation factor G a second chance to translocate the tRNAs correctly. Binds to ribosomes in a GTP-dependent manner. The polypeptide is Elongation factor 4 (Methylobacterium nodulans (strain LMG 21967 / CNCM I-2342 / ORS 2060)).